The primary structure comprises 469 residues: Argininosuccinate lyase (469 aa).

It belongs to the lyase 1 family. Argininosuccinate lyase subfamily.

It localises to the cytoplasm. The enzyme catalyses 2-(N(omega)-L-arginino)succinate = fumarate + L-arginine. It functions in the pathway amino-acid biosynthesis; L-arginine biosynthesis; L-arginine from L-ornithine and carbamoyl phosphate: step 3/3. This Burkholderia multivorans (strain ATCC 17616 / 249) protein is Argininosuccinate lyase.